The primary structure comprises 217 residues: Adapter protein MecA (217 aa).

Belongs to the MecA family. In terms of assembly, homodimer.

In terms of biological role, enables the recognition and targeting of unfolded and aggregated proteins to the ClpC protease or to other proteins involved in proteolysis. Acts negatively in the development of competence by binding ComK and recruiting it to the ClpCP protease. When overexpressed, inhibits sporulation. Also involved in Spx degradation by ClpC. This Alkalihalophilus pseudofirmus (strain ATCC BAA-2126 / JCM 17055 / OF4) (Bacillus pseudofirmus) protein is Adapter protein MecA.